A 517-amino-acid chain; its full sequence is Glutamyl-tRNA(Gln) amidotransferase subunit A, mitochondrial (517 aa).

Catalysis depends on charge relay system residues lysine 58 and serine 131. The tract at residues 106-132 (FGMGTHSTHSAHGPVASPAGRSAGGSS) is disordered. Catalysis depends on serine 155, which acts as the Acyl-ester intermediate.

It belongs to the amidase family. GatA subfamily. As to quaternary structure, subunit of the heterotrimeric GatCAB amidotransferase (AdT) complex, composed of A, B and C subunits.

It localises to the mitochondrion. It catalyses the reaction L-glutamyl-tRNA(Gln) + L-glutamine + ATP + H2O = L-glutaminyl-tRNA(Gln) + L-glutamate + ADP + phosphate + H(+). Allows the formation of correctly charged Gln-tRNA(Gln) through the transamidation of misacylated Glu-tRNA(Gln) in the mitochondria. The reaction takes place in the presence of glutamine and ATP through an activated gamma-phospho-Glu-tRNA(Gln). The polypeptide is Glutamyl-tRNA(Gln) amidotransferase subunit A, mitochondrial (Pyricularia oryzae (strain 70-15 / ATCC MYA-4617 / FGSC 8958) (Rice blast fungus)).